The chain runs to 605 residues: Glutamine--fructose-6-phosphate aminotransferase [isomerizing] (605 aa).

The active-site Nucleophile; for GATase activity is cysteine 2. A Glutamine amidotransferase type-2 domain is found at 2–219 (CGIVGVVGSK…DKELVVLTKD (218 aa)). 2 SIS domains span residues 285–424 (IIKG…AEGE) and 457–595 (VADL…VDKP). Lysine 600 functions as the For Fru-6P isomerization activity in the catalytic mechanism.

In terms of assembly, homodimer.

The protein resides in the cytoplasm. The catalysed reaction is D-fructose 6-phosphate + L-glutamine = D-glucosamine 6-phosphate + L-glutamate. Its function is as follows. Catalyzes the first step in hexosamine metabolism, converting fructose-6P into glucosamine-6P using glutamine as a nitrogen source. The sequence is that of Glutamine--fructose-6-phosphate aminotransferase [isomerizing] from Lactococcus lactis subsp. lactis (strain IL1403) (Streptococcus lactis).